A 294-amino-acid polypeptide reads, in one-letter code: Acetyl-coenzyme A carboxylase carboxyl transferase subunit beta (294 aa).

Positions 25 to 294 (VWTKCTACEQ…PFLEPEIIAD (270 aa)) constitute a CoA carboxyltransferase N-terminal domain. Zn(2+)-binding residues include cysteine 29, cysteine 32, cysteine 48, and cysteine 51. The C4-type zinc finger occupies 29–51 (CTACEQVLYRDELKRHLEVCPKC).

It belongs to the AccD/PCCB family. Acetyl-CoA carboxylase is a heterohexamer composed of biotin carboxyl carrier protein (AccB), biotin carboxylase (AccC) and two subunits each of ACCase subunit alpha (AccA) and ACCase subunit beta (AccD). The cofactor is Zn(2+).

Its subcellular location is the cytoplasm. It catalyses the reaction N(6)-carboxybiotinyl-L-lysyl-[protein] + acetyl-CoA = N(6)-biotinyl-L-lysyl-[protein] + malonyl-CoA. Its pathway is lipid metabolism; malonyl-CoA biosynthesis; malonyl-CoA from acetyl-CoA: step 1/1. Its function is as follows. Component of the acetyl coenzyme A carboxylase (ACC) complex. Biotin carboxylase (BC) catalyzes the carboxylation of biotin on its carrier protein (BCCP) and then the CO(2) group is transferred by the transcarboxylase to acetyl-CoA to form malonyl-CoA. This is Acetyl-coenzyme A carboxylase carboxyl transferase subunit beta from Actinobacillus succinogenes (strain ATCC 55618 / DSM 22257 / CCUG 43843 / 130Z).